We begin with the raw amino-acid sequence, 667 residues long: MTQLSRFLYGGDYNPDQWPEETWSKDIHVFKKADINSATINIFSWALLEPREGKYNFSKLDKVVQQLSDANFDIVMGTATAAMPAWMFKKYPDIARVDYQDRRHVFGQRHNFCPNSSNYQRLAGELVKQLVERYKDNKHIVVWHINNEYGGNCYCENCQNAFRKWLKNKYKTVEGLNKAWNMNVWSHTIYDWDEIVVPNELGDVWGIEGSETIVAGLSIDYLRFQSESMQNLFKMEKKIIKKYDPETPVTTNFHGLPNKMVDYQKWAKGQDIISYDSYPTYDAPAYKAAFLYDLMRSLKHQPFMLMESAPSQVNWQPYSPLKRPGQMEATEFQAVAHGADTVQFFQLKQAVGGSEKFHSAVIAHSQRTDTRVFKELADLGKKLKNAGPTILGSKTKAKVAIVFDWSNFWSYEYVDGITQDLNYVDSILDYYRQFYERNIPTDIIGVDDDFSNYDLVVAPVLYMVKHGLDKKINDYVENGGNFVTTYMSGMVNSSDNVYLGGYPGPLKEVTGIWVEESDAVVPGQKIKVLMNGKDYDTGLICNLIHPNDAKILATYASEFYAGTPAVTENQYGKGRAWYIGTRLEHQGLTQLFNHIIFETGVESLVCDSHKLEITKRVTEDGKELYFVLNMSNEERTLPSKFTGYEDILTGEKAHKDMKGWDVQVLRN.

A substrate-binding site is contributed by Arg109. Cys113 provides a ligand contact to Zn(2+). A substrate-binding site is contributed by Asn147. The Proton donor role is filled by Glu148. Residues Cys153, Cys155, and Cys158 each coordinate Zn(2+). The active-site Nucleophile is Glu307. Substrate is bound by residues Trp315 and 355–358; that span reads EKFH.

The protein belongs to the glycosyl hydrolase 42 family.

The catalysed reaction is Hydrolysis of terminal non-reducing beta-D-galactose residues in beta-D-galactosides.. Functionally, catalyzes the hydrolysis of lactose to its constituent monosaccharides glucose and galactose. This Lactobacillus acidophilus (strain ATCC 700396 / NCK56 / N2 / NCFM) protein is Beta-galactosidase LacZ.